The following is a 620-amino-acid chain: Sodium-dependent dopamine transporter (620 aa).

Topologically, residues 1 to 56 (MSKSKCSVGLMSSVVAPAKEPNAMGPKEVELILVKEQNGVQLTSSTLTNPRQSPVE) are cytoplasmic. A discontinuously helical membrane pass occupies residues 57–95 (AQDRETWGKKIDFLLSVIGFAVDLANVWRFPYLCYKNGG). Na(+) contacts are provided by G75, A77, V78, D79, and N82. Residue D79 coordinates dopamine. 2 helical membrane-spanning segments follow: residues 96-127 (GAFLVPYLLFMVIAGMPLFYMELALGQFNREG) and 128-171 (AAGV…FSSF). Dopamine contacts are provided by S149 and G153. Residues 172–236 (TTELPWIHCN…SHGIDDLGPP (65 aa)) lie on the Extracellular side of the membrane. Residues C180 and C189 are joined by a disulfide bond. 3 N-linked (GlcNAc...) asparagine glycosylation sites follow: N181, N188, and N205. 2 helical membrane-spanning segments follow: residues 237-256 (RWQLTACLVLVIVLLYFSLW) and 257-287 (KGVKTSGKVVWITATMPYVVLTALLLRGVTL). Residues 288-306 (PGAIDGIRAYLSVDFYRLC) lie on the Extracellular side of the membrane. The discontinuously helical transmembrane segment at 307–335 (EASVWIDAATQVCFSLGVGFGVLIAFSSY) threads the bilayer. Q317 lines the chloride pocket. F320 is a binding site for dopamine. S321 and N353 together coordinate Na(+). S321 is a binding site for chloride. Residues 336-376 (NKFTNNCYRDAIVTTSINSLTSFSSGFVVFSFLGYMAQKHS) traverse the membrane as a helical segment. Position 357 (S357) interacts with chloride. At 377 to 400 (VPIGDVAKDGPGLIFIIYPEAIAT) the chain is on the extracellular side. Helical transmembrane passes span 401-442 (LPLS…QLLH), 443-466 (RHRELFTLFIVLATFLLSLFCVTN), and 467-499 (GGIYVFTLLDHFAAGTSILFGVLIEAIGVAWFY). Residues L418, D421, and S422 each contribute to the Na(+) site. Dopamine contacts are provided by S422 and A423. Topologically, residues 500–516 (GVGQFSDDIQQMTGQRP) are cytoplasmic. Residues 517-542 (SLYWRLCWKLVSPCFLLFVVVVSIVT) form a helical membrane-spanning segment. The Extracellular segment spans residues 543–553 (FRPPHYGAYIF). The chain crosses the membrane as a helical span at residues 554–583 (PDWANALGWVIATSSMAMVPIYAAYKFCSL). The segment at 561–590 (GWVIATSSMAMVPIYAAYKFCSLPGSFREK) is interaction with TGFB1I1. Residues 584 to 620 (PGSFREKLAYAIAPEKDRELVDRGEVRQFTLRHWLKV) lie on the Cytoplasmic side of the membrane.

Belongs to the sodium:neurotransmitter symporter (SNF) (TC 2.A.22) family. SLC6A3 subfamily. In terms of assembly, monomer. Homooligomer; disulfide-linked. Interacts with PRKCABP and TGFB1I1. Interacts (via N-terminus) with SYNGR3 (via N-terminus). Interacts with SLC18A2. Interacts with TOR1A (ATP-bound); TOR1A regulates SLC6A3 subcellular location. Interacts with alpha-synuclein/SNCA. Interacts with SEPTIN4.

It localises to the cell membrane. Its subcellular location is the cell projection. The protein resides in the neuron projection. The protein localises to the axon. The enzyme catalyses dopamine(out) + chloride(out) + Na(+)(out) = dopamine(in) + chloride(in) + Na(+)(in). The catalysed reaction is (R)-noradrenaline(out) + chloride(out) + Na(+)(out) = (R)-noradrenaline(in) + chloride(in) + Na(+)(in). It carries out the reaction dopamine(out) + chloride(out) + 2 Na(+)(out) = dopamine(in) + chloride(in) + 2 Na(+)(in). Inhibited by zinc ions. Mediates sodium- and chloride-dependent transport of dopamine. Also mediates sodium- and chloride-dependent transport of norepinephrine (also known as noradrenaline). Regulator of light-dependent retinal hyaloid vessel regression, downstream of OPN5 signaling. The protein is Sodium-dependent dopamine transporter (SLC6A3) of Macaca fascicularis (Crab-eating macaque).